Reading from the N-terminus, the 287-residue chain is Ventral anterior homeobox 1b (287 aa).

Residues 1–33 (MFEKTRDMDVRCNIEENGRISKPKDNKEIRESQ) show a composition bias toward basic and acidic residues. The tract at residues 1–55 (MFEKTRDMDVRCNIEENGRISKPKDNKEIRESQSKMPSTYPAPGSSEGCAKNKSS) is disordered. The segment at residues 89–148 (PKRTRTSFTAEQLYRLEMEFQRCQYVVGRERTELARQLNLSETQVKVWFQNRRTKQKKDQ) is a DNA-binding region (homeobox).

This sequence belongs to the EMX homeobox family.

The protein localises to the nucleus. Involved in ventral eye development. This is Ventral anterior homeobox 1b (vax1-b) from Xenopus laevis (African clawed frog).